A 232-amino-acid chain; its full sequence is Thiamine import ATP-binding protein ThiQ (232 aa).

One can recognise an ABC transporter domain in the interval 2–230 (LKLTDITWLY…KASASALLGI (229 aa)). ATP is bound at residue 32–39 (GPSGAGKS).

This sequence belongs to the ABC transporter superfamily. Thiamine importer (TC 3.A.1.19.1) family. In terms of assembly, the complex is composed of two ATP-binding proteins (ThiQ), two transmembrane proteins (ThiP) and a solute-binding protein (ThiB).

It is found in the cell inner membrane. The catalysed reaction is thiamine(out) + ATP + H2O = thiamine(in) + ADP + phosphate + H(+). Functionally, part of the ABC transporter complex ThiBPQ involved in thiamine import. Responsible for energy coupling to the transport system. The chain is Thiamine import ATP-binding protein ThiQ from Escherichia coli O6:K15:H31 (strain 536 / UPEC).